The primary structure comprises 443 residues: Structure-specific endonuclease subunit SLX1 (443 aa).

Residues 13–93 (RVYVCYCLRS…QKPHASRHLR (81 aa)) enclose the GIY-YIG domain. The disordered stretch occupies residues 121 to 140 (FPATRSSAPSSAASHDSGLN). The segment at 361 to 419 (CGLCGGHINRHVPLSYTHCPHACDAVFHLTCLARYSLEQETRAHARTFCLPTSAWCPMC) adopts an SLX1-type zinc-finger fold.

It belongs to the SLX1 family. In terms of assembly, forms a heterodimer with SLX4. A divalent metal cation serves as cofactor.

The protein localises to the nucleus. Catalytic subunit of the SLX1-SLX4 structure-specific endonuclease that resolves DNA secondary structures generated during DNA repair and recombination. Has endonuclease activity towards branched DNA substrates, introducing single-strand cuts in duplex DNA close to junctions with ss-DNA. The sequence is that of Structure-specific endonuclease subunit SLX1 from Malassezia globosa (strain ATCC MYA-4612 / CBS 7966) (Dandruff-associated fungus).